The chain runs to 358 residues: Phenylalanine--tRNA ligase alpha subunit (358 aa).

E279 contributes to the Mg(2+) binding site.

The protein belongs to the class-II aminoacyl-tRNA synthetase family. Phe-tRNA synthetase alpha subunit type 1 subfamily. As to quaternary structure, tetramer of two alpha and two beta subunits. Mg(2+) serves as cofactor.

It is found in the cytoplasm. It catalyses the reaction tRNA(Phe) + L-phenylalanine + ATP = L-phenylalanyl-tRNA(Phe) + AMP + diphosphate + H(+). The sequence is that of Phenylalanine--tRNA ligase alpha subunit from Variovorax paradoxus (strain S110).